Reading from the N-terminus, the 491-residue chain is Cysteine--tRNA ligase (491 aa).

C29 provides a ligand contact to Zn(2+). The 'HIGH' region signature appears at 31-41; that stretch reads PTVYDFAHIGN. Zn(2+) contacts are provided by C227, H252, and E256. Residues 285 to 289 carry the 'KMSKS' region motif; it reads KMSKS. K288 is a binding site for ATP.

This sequence belongs to the class-I aminoacyl-tRNA synthetase family. In terms of assembly, monomer. It depends on Zn(2+) as a cofactor.

Its subcellular location is the cytoplasm. It catalyses the reaction tRNA(Cys) + L-cysteine + ATP = L-cysteinyl-tRNA(Cys) + AMP + diphosphate. The polypeptide is Cysteine--tRNA ligase (Rhodopseudomonas palustris (strain TIE-1)).